Here is a 145-residue protein sequence, read N- to C-terminus: D-aminoacyl-tRNA deacylase (145 aa).

The short motif at 137 to 138 (GP) is the Gly-cisPro motif, important for rejection of L-amino acids element.

This sequence belongs to the DTD family. Homodimer.

It is found in the cytoplasm. The catalysed reaction is glycyl-tRNA(Ala) + H2O = tRNA(Ala) + glycine + H(+). It catalyses the reaction a D-aminoacyl-tRNA + H2O = a tRNA + a D-alpha-amino acid + H(+). An aminoacyl-tRNA editing enzyme that deacylates mischarged D-aminoacyl-tRNAs. Also deacylates mischarged glycyl-tRNA(Ala), protecting cells against glycine mischarging by AlaRS. Acts via tRNA-based rather than protein-based catalysis; rejects L-amino acids rather than detecting D-amino acids in the active site. By recycling D-aminoacyl-tRNA to D-amino acids and free tRNA molecules, this enzyme counteracts the toxicity associated with the formation of D-aminoacyl-tRNA entities in vivo and helps enforce protein L-homochirality. This Exiguobacterium sibiricum (strain DSM 17290 / CCUG 55495 / CIP 109462 / JCM 13490 / 255-15) protein is D-aminoacyl-tRNA deacylase.